The following is a 327-amino-acid chain: Beta-ketoacyl-[acyl-carrier-protein] synthase III 2 (327 aa).

Catalysis depends on residues cysteine 114 and histidine 251. An ACP-binding region spans residues 252–256; that stretch reads SANLR. The active site involves asparagine 281.

This sequence belongs to the thiolase-like superfamily. FabH family. Homodimer.

It localises to the cytoplasm. The catalysed reaction is malonyl-[ACP] + acetyl-CoA + H(+) = 3-oxobutanoyl-[ACP] + CO2 + CoA. Its pathway is lipid metabolism; fatty acid biosynthesis. Functionally, catalyzes the condensation reaction of fatty acid synthesis by the addition to an acyl acceptor of two carbons from malonyl-ACP. Catalyzes the first condensation reaction which initiates fatty acid synthesis and may therefore play a role in governing the total rate of fatty acid production. Possesses both acetoacetyl-ACP synthase and acetyl transacylase activities. Its substrate specificity determines the biosynthesis of branched-chain and/or straight-chain of fatty acids. This Bacillus anthracis protein is Beta-ketoacyl-[acyl-carrier-protein] synthase III 2.